The chain runs to 171 residues: S-ribosylhomocysteine lyase (171 aa).

Positions 54, 58, and 128 each coordinate Fe cation.

Belongs to the LuxS family. Homodimer. Fe cation is required as a cofactor.

It catalyses the reaction S-(5-deoxy-D-ribos-5-yl)-L-homocysteine = (S)-4,5-dihydroxypentane-2,3-dione + L-homocysteine. Its function is as follows. Involved in the synthesis of autoinducer 2 (AI-2) which is secreted by bacteria and is used to communicate both the cell density and the metabolic potential of the environment. The regulation of gene expression in response to changes in cell density is called quorum sensing. Catalyzes the transformation of S-ribosylhomocysteine (RHC) to homocysteine (HC) and 4,5-dihydroxy-2,3-pentadione (DPD). This is S-ribosylhomocysteine lyase from Shigella boydii serotype 4 (strain Sb227).